The sequence spans 114 residues: Ribosome-binding factor A (114 aa).

Belongs to the RbfA family. Monomer. Binds 30S ribosomal subunits, but not 50S ribosomal subunits or 70S ribosomes.

It is found in the cytoplasm. In terms of biological role, one of several proteins that assist in the late maturation steps of the functional core of the 30S ribosomal subunit. Associates with free 30S ribosomal subunits (but not with 30S subunits that are part of 70S ribosomes or polysomes). Required for efficient processing of 16S rRNA. May interact with the 5'-terminal helix region of 16S rRNA. This chain is Ribosome-binding factor A, found in Listeria welshimeri serovar 6b (strain ATCC 35897 / DSM 20650 / CCUG 15529 / CIP 8149 / NCTC 11857 / SLCC 5334 / V8).